A 390-amino-acid chain; its full sequence is Galactokinase (390 aa).

A substrate-binding site is contributed by 33–36 (EHTD). Residues Ser-67 and 124–130 (GAGLSSS) contribute to the ATP site. Mg(2+) is bound by residues Ser-130 and Glu-162. Asp-174 (proton acceptor) is an active-site residue. Residue Tyr-224 coordinates substrate.

This sequence belongs to the GHMP kinase family. GalK subfamily.

The protein localises to the cytoplasm. The catalysed reaction is alpha-D-galactose + ATP = alpha-D-galactose 1-phosphate + ADP + H(+). It participates in carbohydrate metabolism; galactose metabolism. Functionally, catalyzes the transfer of the gamma-phosphate of ATP to D-galactose to form alpha-D-galactose-1-phosphate (Gal-1-P). This is Galactokinase from Exiguobacterium sibiricum (strain DSM 17290 / CCUG 55495 / CIP 109462 / JCM 13490 / 255-15).